The following is a 463-amino-acid chain: Rop guanine nucleotide exchange factor 4 (463 aa).

Disordered stretches follow at residues 1–25 (MESSSNSDQNEGTPTSSVSSPYRRT) and 55–87 (GHEEDVSEDAEEPKDDVVNDVHGDGDEEDSDID). Residues 59–68 (DVSEDAEEPK) are compositionally biased toward acidic residues. Residues 69 to 78 (DDVVNDVHGD) are compositionally biased toward basic and acidic residues. The 380-residue stretch at 84 to 463 (SDIDSAEDAE…VDRTVRNRDD (380 aa)) folds into the PRONE domain.

As to quaternary structure, interacts with ARAC10/ROP11. As to expression, expressed in root vascular tissue and trichoblast cell files. Expressed in root metaxylem cell files. Expressed in guard cells of cotyledons, rosette leaves, sepals, petal, stigmas and siliques. Expressed in root metaxylem cell files.

The protein localises to the cytoplasm. The protein resides in the cell membrane. Functionally, guanine-nucleotide exchange factor (GEF) that acts as an activator of Rop (Rho of plants) GTPases by promoting the exchange of GDP for GTP. In association with ROPGEF1, acts as a specific regulator of ARAC10/ROP11 function in ABA-mediated stomatal closure. The polypeptide is Rop guanine nucleotide exchange factor 4 (ROPGEF4) (Arabidopsis thaliana (Mouse-ear cress)).